The primary structure comprises 158 residues: Biotin carboxyl carrier protein of acetyl-CoA carboxylase (158 aa).

Residues 81–157 (YATIVSPMVG…DCGQALMKVE (77 aa)) enclose the Biotinyl-binding domain. An N6-biotinyllysine modification is found at Lys123.

It is found in the plastid. Its subcellular location is the chloroplast. It participates in lipid metabolism; fatty acid biosynthesis. In terms of biological role, this protein is a component of the acetyl coenzyme A carboxylase complex; first, biotin carboxylase catalyzes the carboxylation of the carrier protein and then the transcarboxylase transfers the carboxyl group to form malonyl-CoA. The chain is Biotin carboxyl carrier protein of acetyl-CoA carboxylase (accB) from Pyropia yezoensis (Susabi-nori).